A 122-amino-acid chain; its full sequence is Small ribosomal subunit protein uS13 (122 aa).

The tract at residues 99-122 (RGQRTHTNARTRKGPAKAIAGKKK) is disordered.

It belongs to the universal ribosomal protein uS13 family. As to quaternary structure, part of the 30S ribosomal subunit. Forms a loose heterodimer with protein S19. Forms two bridges to the 50S subunit in the 70S ribosome.

Its function is as follows. Located at the top of the head of the 30S subunit, it contacts several helices of the 16S rRNA. In the 70S ribosome it contacts the 23S rRNA (bridge B1a) and protein L5 of the 50S subunit (bridge B1b), connecting the 2 subunits; these bridges are implicated in subunit movement. Contacts the tRNAs in the A and P-sites. This chain is Small ribosomal subunit protein uS13, found in Sinorhizobium medicae (strain WSM419) (Ensifer medicae).